The following is a 129-amino-acid chain: Small ribosomal subunit protein uS9 (129 aa).

This sequence belongs to the universal ribosomal protein uS9 family.

The sequence is that of Small ribosomal subunit protein uS9 from Helicobacter hepaticus (strain ATCC 51449 / 3B1).